A 365-amino-acid polypeptide reads, in one-letter code: Alanine racemase (365 aa).

K35 acts as the Proton acceptor; specific for D-alanine in catalysis. K35 is modified (N6-(pyridoxal phosphate)lysine). R130 provides a ligand contact to substrate. The active-site Proton acceptor; specific for L-alanine is Y256. M304 serves as a coordination point for substrate.

Belongs to the alanine racemase family. Pyridoxal 5'-phosphate is required as a cofactor.

The catalysed reaction is L-alanine = D-alanine. It participates in amino-acid biosynthesis; D-alanine biosynthesis; D-alanine from L-alanine: step 1/1. Its function is as follows. Catalyzes the interconversion of L-alanine and D-alanine. May also act on other amino acids. The chain is Alanine racemase (alr) from Acidovorax ebreus (strain TPSY) (Diaphorobacter sp. (strain TPSY)).